A 90-amino-acid chain; its full sequence is MSILSSLISISNPMKSSKSSVANGGGSSLSMGSNSIACGSCGSNGGNGRKRLPSDYTNIDSNAGSYTTASGSTYSYSYSYGYYSGSCGCN.

The protein belongs to the hssA/B family.

The protein is HssA/B-like protein 4 (hssl4) of Dictyostelium discoideum (Social amoeba).